We begin with the raw amino-acid sequence, 606 residues long: MCGIVGMVGENLKLEDLVTSLQKLEYRGYDSAGIAYLGDSFGVYKKKGRIDVLKNGLKQKLNDRFFVGIAHTRWATHGEPNDMNAHPHMDCKEEIAVVHNGIIENYREIREFLEQRGHVFSSETDTEVIAHLVEEEFEGDLLDAVLKAVKKLKGAYAIAVVHKNVPDTIVAARKGSPLVAGIGSGVGILASDVTPLLRFTKDVVFLEDGDVMVLRKDGFEIYNTDGVKQQRRVYHVNWDEKAAEKGGYKHFMYKEIMEDPQALVNALVGRVKNDRPFFEELEYYEELLKNADRIRVVSCGTSYYAGLVFKYFLENHTDIDVEIEVSSEFRYKRPHIKEGDVLIAISQSGETADTLESVRLAKKHGAKIVSIVNVVGSTLDRESDVTLFMNAGPEIGVAATKTYVAELAVLYLLGLKIMEINGYWDREAEEILDKLVRMPELLENVLRKDPQIRELSEKYKDYRNFMYIGRGYGYPTALEGALKLKEITYIHATAYQAGELKHGPIALLDVDFPVFAVMPDDSLFFKTKSNVIESKSRNAPVIVLGTEGNRSLEEITGDIIHVPPTHESLYPLMMAPVIQLFAYHIADLKGLDPDKPRNLAKSVTVE.

Cys-2 functions as the Nucleophile; for GATase activity in the catalytic mechanism. Residues 2–217 enclose the Glutamine amidotransferase type-2 domain; sequence CGIVGMVGEN…DGDVMVLRKD (216 aa). SIS domains are found at residues 284–423 and 455–596; these read YEEL…INGY and LSEK…PDKP. Catalysis depends on Lys-601, which acts as the For Fru-6P isomerization activity.

In terms of assembly, homodimer.

It localises to the cytoplasm. The enzyme catalyses D-fructose 6-phosphate + L-glutamine = D-glucosamine 6-phosphate + L-glutamate. Catalyzes the first step in hexosamine metabolism, converting fructose-6P into glucosamine-6P using glutamine as a nitrogen source. This is Glutamine--fructose-6-phosphate aminotransferase [isomerizing] from Thermotoga maritima (strain ATCC 43589 / DSM 3109 / JCM 10099 / NBRC 100826 / MSB8).